Reading from the N-terminus, the 1089-residue chain is Platelet-derived growth factor receptor alpha (1089 aa).

A signal peptide spans 1 to 24 (MGTSHQVFLVLSCLLTGPGLISCQ). Ig-like C2-type domains lie at 25–113 (LLLP…SEIE), 117–201 (IYIY…FKTS), 202–306 (EFNV…KRVT), 319–410 (PTFG…FELS), and 414–517 (PASI…LKLV). Topologically, residues 25–528 (LLLPSILPNE…PTLRSELTVA (504 aa)) are extracellular. N-linked (GlcNAc...) asparagine glycosylation is found at asparagine 42, asparagine 76, asparagine 89, asparagine 103, and asparagine 179. A disulfide bond links cysteine 49 and cysteine 100. 2 cysteine pairs are disulfide-bonded: cysteine 150–cysteine 189 and cysteine 235–cysteine 290. N-linked (GlcNAc...) asparagine glycans are attached at residues asparagine 353, asparagine 359, asparagine 458, asparagine 468, and asparagine 506. Cysteine 435 and cysteine 501 are joined by a disulfide. A helical transmembrane segment spans residues 529-549 (AAVLVLLVIVIVSLIVLVVIW). Residues 550-1089 (KQKPRYEIRW…SSDLVEDSFL (540 aa)) are Cytoplasmic-facing. Tyrosine 572 and tyrosine 574 each carry phosphotyrosine; by autocatalysis. Residues 593-954 (LVLGRILGSG…HLSEIVENLL (362 aa)) enclose the Protein kinase domain. ATP contacts are provided by residues 599 to 607 (LGSGAFGKV) and lysine 627. Phosphotyrosine; by autocatalysis is present on residues tyrosine 720, tyrosine 731, tyrosine 742, tyrosine 754, tyrosine 762, and tyrosine 768. Residue aspartate 818 is the Proton acceptor of the active site. Phosphotyrosine; by autocatalysis is present on residues tyrosine 849, tyrosine 988, and tyrosine 1018. The tract at residues 1018–1089 (YIIPLPDIDP…SSDLVEDSFL (72 aa)) is disordered. Residues 1041–1059 (SSQTSEESAIETGSSSSTF) show a composition bias toward polar residues. Positions 1065–1089 (ETIEDIDMMDDIGIDSSDLVEDSFL) are enriched in acidic residues.

The protein belongs to the protein kinase superfamily. Tyr protein kinase family. CSF-1/PDGF receptor subfamily. As to quaternary structure, interacts with homodimeric PDGFA, PDGFB and PDGFC, and with heterodimers formed by PDGFA and PDGFB. Monomer in the absence of bound ligand. Interaction with dimeric PDGFA, PDGFB and/or PDGFC leads to receptor dimerization, where both PDGFRA homodimers and heterodimers with PDGFRB are observed. Interacts (tyrosine phosphorylated) with SHB (via SH2 domain). Interacts (tyrosine phosphorylated) with SHF (via SH2 domain). Interacts (tyrosine phosphorylated) with SRC (via SH2 domain). Interacts (tyrosine phosphorylated) with PIK3R1. Interacts (tyrosine phosphorylated) with PLCG1 (via SH2 domain). Interacts (tyrosine phosphorylated) with CRK, GRB2 and GRB7. Interacts with CD248; this interaction promotes PDGF receptor signaling pathway. Ubiquitinated, leading to its internalization and degradation. In terms of processing, autophosphorylated on tyrosine residues upon ligand binding. Autophosphorylation occurs in trans, i.e. one subunit of the dimeric receptor phosphorylates tyrosine residues on the other subunit. Phosphorylation at Tyr-731 and Tyr-742 is important for interaction with PIK3R1. Phosphorylation at Tyr-720 and Tyr-754 is important for interaction with PTPN11. Phosphorylation at Tyr-762 is important for interaction with CRK. Phosphorylation at Tyr-572 and Tyr-574 is important for interaction with SRC and SRC family members. Phosphorylation at Tyr-988 and Tyr-1018 is important for interaction with PLCG1. Focally expressed in cortical interstitial cells and highly expressed in the interstitium of the papillary region. Also expressed by adventitial cells in arterial vessels. Up-regulated in areas of renal fibrosis. In mice with unilateral ureteral obstruction, expression in cortical interstitial cells becomes prominent at day 4 which increases progressively until day 14.

The protein localises to the cell membrane. It localises to the cell projection. It is found in the cilium. Its subcellular location is the golgi apparatus. The catalysed reaction is L-tyrosyl-[protein] + ATP = O-phospho-L-tyrosyl-[protein] + ADP + H(+). Present in an inactive conformation in the absence of bound ligand. Binding of PDGFA and/or PDGFB leads to dimerization and activation by autophosphorylation on tyrosine residues. Inhibited by imatinib, nilotinib and sorafenib. In terms of biological role, tyrosine-protein kinase that acts as a cell-surface receptor for PDGFA, PDGFB and PDGFC and plays an essential role in the regulation of embryonic development, cell proliferation, survival and chemotaxis. Depending on the context, promotes or inhibits cell proliferation and cell migration. Plays an important role in the differentiation of bone marrow-derived mesenchymal stem cells. Required for normal skeleton development and cephalic closure during embryonic development. Required for normal development of the mucosa lining the gastrointestinal tract, and for recruitment of mesenchymal cells and normal development of intestinal villi. Plays a role in cell migration and chemotaxis in wound healing. Plays a role in platelet activation, secretion of agonists from platelet granules, and in thrombin-induced platelet aggregation. Binding of its cognate ligands - homodimeric PDGFA, homodimeric PDGFB, heterodimers formed by PDGFA and PDGFB or homodimeric PDGFC -leads to the activation of several signaling cascades; the response depends on the nature of the bound ligand and is modulated by the formation of heterodimers between PDGFRA and PDGFRB. Phosphorylates PIK3R1, PLCG1, and PTPN11. Activation of PLCG1 leads to the production of the cellular signaling molecules diacylglycerol and inositol 1,4,5-trisphosphate, mobilization of cytosolic Ca(2+) and the activation of protein kinase C. Phosphorylates PIK3R1, the regulatory subunit of phosphatidylinositol 3-kinase, and thereby mediates activation of the AKT1 signaling pathway. Mediates activation of HRAS and of the MAP kinases MAPK1/ERK2 and/or MAPK3/ERK1. Promotes activation of STAT family members STAT1, STAT3 and STAT5A and/or STAT5B. Receptor signaling is down-regulated by protein phosphatases that dephosphorylate the receptor and its down-stream effectors, and by rapid internalization of the activated receptor. The chain is Platelet-derived growth factor receptor alpha (Pdgfra) from Mus musculus (Mouse).